The sequence spans 184 residues: Cobalamin adenosyltransferase (184 aa).

Positions 1–21 (MGNRLSKIATRTGDAGTTGLG) are disordered. Residues 10–13 (TRTG), 18–19 (TG), Lys-28, 130–134 (RRAER), and Asn-154 contribute to the ATP site.

It belongs to the Cob(I)alamin adenosyltransferase family. In terms of assembly, homotrimer.

It catalyses the reaction 2 cob(II)alamin + AH2 + 2 ATP = 2 adenosylcob(III)alamin + 2 triphosphate + A + 2 H(+). With respect to regulation, is potentially allosterically regulated by GTP/GDP, which enhances its affinity for AdoCbl by 5-fold. Binds cob(II)alamin weakly in the absence of ATP. The presence of ATP (but not GTP or GDP) increases the affinity of cob(II)alamin for the enzyme, and stoichiometric binding is observed. GTP blocks the transfer of cob(II)alamin to IcmF from ATR, thus averting its reconstitution with inactive cofactor. Its function is as follows. Adenosyltransferase that catalyzes the conversion of cob(II)alamin to adenosylcob(III)alamin (AdoCbl) in the presence of ATP and an electron donor. Acts as an accessory protein of IcmF that functions in cofactor repair, since IcmF is prone to inactivation during catalytic turnover due to the occasional loss of the 5'-deoxyadenosine moiety and formation of the inactive cob(II)alamin cofactor in its active site. Thus, receives and repairs the inactive cofactor, which is then reloaded onto IcmF in a GTPase-gated step. This chain is Cobalamin adenosyltransferase, found in Cupriavidus metallidurans (strain ATCC 43123 / DSM 2839 / NBRC 102507 / CH34) (Ralstonia metallidurans).